The chain runs to 236 residues: MQNLNDPKIIVALDFPSQNPALALADQLDPAKCRLKVGKELFTRSGPDLVKALQSRGFDIFLDLKFHDIPNTTSAAVAAAAELGVWMVNVHASGGEKMMVACRERLESFGNDRPLLIAVTVLTSMSDEDLAGIGIASSAEAHVSRLATLTKNSGLDGVVCSAQEAPRLKAEQGSDFQLITPGIRPLTADKGDQQRIMTPTDALKAGSDYLVIGRPITQAPDPLAALESIHAEVVAV.

Substrate is bound by residues Asp14, Lys36, 63–72 (DLKFHDIPNT), Thr123, Arg184, Gln193, Gly213, and Arg214. The active-site Proton donor is the Lys65.

It belongs to the OMP decarboxylase family. Type 1 subfamily. In terms of assembly, homodimer.

It catalyses the reaction orotidine 5'-phosphate + H(+) = UMP + CO2. It functions in the pathway pyrimidine metabolism; UMP biosynthesis via de novo pathway; UMP from orotate: step 2/2. Functionally, catalyzes the decarboxylation of orotidine 5'-monophosphate (OMP) to uridine 5'-monophosphate (UMP). This Marinobacter nauticus (strain ATCC 700491 / DSM 11845 / VT8) (Marinobacter aquaeolei) protein is Orotidine 5'-phosphate decarboxylase.